The primary structure comprises 63 residues: Large ribosomal subunit protein eL29 (63 aa).

The segment covering 1-26 has biased composition (basic residues); the sequence is MAKSKNHTAHNQTRKAHRNGIKKPKT. The segment at 1-35 is disordered; that stretch reads MAKSKNHTAHNQTRKAHRNGIKKPKTYKYPSLKGV.

It belongs to the eukaryotic ribosomal protein eL29 family. Component of the large ribosomal subunit. Mature ribosomes consist of a small (40S) and a large (60S) subunit. The 40S subunit contains about 32 different proteins and 1 molecule of RNA (18S). The 60S subunit contains 45 different proteins and 3 molecules of RNA (25S, 5.8S and 5S).

Its subcellular location is the cytoplasm. Its function is as follows. Component of the ribosome, a large ribonucleoprotein complex responsible for the synthesis of proteins in the cell. The small ribosomal subunit (SSU) binds messenger RNAs (mRNAs) and translates the encoded message by selecting cognate aminoacyl-transfer RNA (tRNA) molecules. The large subunit (LSU) contains the ribosomal catalytic site termed the peptidyl transferase center (PTC), which catalyzes the formation of peptide bonds, thereby polymerizing the amino acids delivered by tRNAs into a polypeptide chain. The nascent polypeptides leave the ribosome through a tunnel in the LSU and interact with protein factors that function in enzymatic processing, targeting, and the membrane insertion of nascent chains at the exit of the ribosomal tunnel. The sequence is that of Large ribosomal subunit protein eL29 from Candida albicans (strain SC5314 / ATCC MYA-2876) (Yeast).